Consider the following 80-residue polypeptide: Waprin-Phi3 (80 aa).

The signal sequence occupies residues 1 to 22 (MKPWILLLLAGLLILSTQLTTA). In terms of domain architecture, WAP spans 31–78 (PKVKPGECPKVKIPPDYPCNQYCVWDFDCEGNKKCCPVGCAKECFPPG). 4 cysteine pairs are disulfide-bonded: C38–C66, C49–C70, C53–C65, and C59–C74.

This sequence belongs to the venom waprin family. Expressed by the venom gland.

The protein resides in the secreted. Its function is as follows. Damages membranes of susceptible bacteria. Has no hemolytic activity. Not toxic to mice. Does not inhibit the proteinases elastase and cathepsin G. This is Waprin-Phi3 from Philodryas olfersii (Green snake).